Here is a 213-residue protein sequence, read N- to C-terminus: MVNYPNGRSRAYSTVPKKKKSLTELSVTKKSTSKTKGMVAFGKRGMNFEAEINATNEYYLSRGLAVIHKKPTPIQIVKVDYPQRSRAKITEAYFRQASTTDYSGVYKGHYIDFEAKETQQKTVFPLKNFHEHQIVHMSNVLAQGGIAFVLLHFARLNETYLLPSSCLITFYYEKGGLKSIPLSHIRENGYKIETNHIPRIPYLEIVNKLCEVQ.

The Mg(2+) site is built by Thr99, Asp101, Glu114, and Gln133.

Belongs to the RecU family. Mg(2+) serves as cofactor.

Its subcellular location is the cytoplasm. The enzyme catalyses Endonucleolytic cleavage at a junction such as a reciprocal single-stranded crossover between two homologous DNA duplexes (Holliday junction).. In terms of biological role, endonuclease that resolves Holliday junction intermediates in genetic recombination. Cleaves mobile four-strand junctions by introducing symmetrical nicks in paired strands. Promotes annealing of linear ssDNA with homologous dsDNA. Required for DNA repair, homologous recombination and chromosome segregation. The polypeptide is Holliday junction resolvase RecU (Lactococcus lactis subsp. lactis (strain IL1403) (Streptococcus lactis)).